A 762-amino-acid chain; its full sequence is 1-phosphatidylinositol 4,5-bisphosphate phosphodiesterase delta-4 (762 aa).

The 109-residue stretch at 16–124 folds into the PH domain; the sequence is LLMQEGMPMR…WMRGLQLLVD (109 aa). Positions 26–53 are substrate binding; the sequence is KVRSKSWKKLRYFRLQNDGMTVWHARQA. EF-hand domains lie at 134–169, 170–205, and 206–237; these read RLDQ…MNVE, MDQE…LTKR, and AEVQ…EQKE. Asp147, Asn149, Asp151, Lys153, Glu158, Asp183, Ser185, Ser187, Thr189, and Glu194 together coordinate Ca(2+). The GBA signature appears at 213–243; sequence ESFSADGQKLTLLEFLDFLREEQKERDCTSE. A PI-PLC X-box domain is found at 290 to 435; that stretch reads QDMTQPLNHY…LRRRILVKGK (146 aa). His305 is a catalytic residue. Residues Asn306, Glu335, and Asp337 each contribute to the Ca(2+) site. His350 is an active-site residue. Residue Glu384 coordinates Ca(2+). The substrate site is built by Lys433 and Lys435. Residues 443–471 show a composition bias toward acidic residues; the sequence is LEYEEEEAEPELEESELALESQFETEPEP. The interval 443-483 is disordered; sequence LEYEEEEAEPELEESELALESQFETEPEPQEQNLQSKDKKK. Residue Ser457 is modified to Phosphoserine. Residues 493–609 form the PI-PLC Y-box domain; sequence LSSLVIYLKS…GYVLKPDFLR (117 aa). Residues Ser522 and Arg549 each contribute to the substrate site. The C2 domain maps to 609-736; the sequence is RDIQSSFHPE…QGYRHIHLLS (128 aa). Ile650, Asp652, Asn676, Asp705, Tyr706, and Asp707 together coordinate Ca(2+). The PDZ-binding motif lies at 731 to 734; sequence HIHL.

As to quaternary structure, interacts with GRIP1. Interacts (via GBA motif) with guanine nucleotide-binding protein G(i) alpha subunit GNAI3 (inactive GDP-bound form); low-affinity interaction. Ca(2+) serves as cofactor.

It is found in the membrane. Its subcellular location is the nucleus. The protein localises to the cytoplasm. The protein resides in the endoplasmic reticulum. The enzyme catalyses a 1,2-diacyl-sn-glycero-3-phospho-(1D-myo-inositol-4,5-bisphosphate) + H2O = 1D-myo-inositol 1,4,5-trisphosphate + a 1,2-diacyl-sn-glycerol + H(+). It carries out the reaction a 1,2-diacyl-sn-glycero-3-phospho-(1D-myo-inositol) + H2O = 1D-myo-inositol 1-phosphate + a 1,2-diacyl-sn-glycerol + H(+). Its function is as follows. Hydrolyzes the phosphatidylinositol 4,5-bisphosphate (PIP2) to generate 2 second messenger molecules diacylglycerol (DAG) and inositol 1,4,5-trisphosphate (IP3). DAG mediates the activation of protein kinase C (PKC), while IP3 releases Ca(2+) from intracellular stores. Required for acrosome reaction in sperm during fertilization, probably by acting as an important enzyme for intracellular Ca(2+) mobilization in the zona pellucida-induced acrosome reaction. May play a role in cell growth. Modulates the liver regeneration in cooperation with nuclear PKC. Overexpression up-regulates the Erk signaling pathway and proliferation. This is 1-phosphatidylinositol 4,5-bisphosphate phosphodiesterase delta-4 (PLCD4) from Pongo abelii (Sumatran orangutan).